A 444-amino-acid polypeptide reads, in one-letter code: Homogentisate 1,2-dioxygenase (444 aa).

The active-site Proton acceptor is the histidine 298. Fe cation contacts are provided by histidine 341 and glutamate 347. Residues tyrosine 356 and histidine 377 each coordinate homogentisate. Position 377 (histidine 377) interacts with Fe cation.

This sequence belongs to the homogentisate dioxygenase family. As to quaternary structure, hexamer; dimer of trimers. Fe cation serves as cofactor.

It carries out the reaction homogentisate + O2 = 4-maleylacetoacetate + H(+). It participates in amino-acid degradation; L-phenylalanine degradation; acetoacetate and fumarate from L-phenylalanine: step 4/6. In terms of biological role, involved in the catabolism of homogentisate (2,5-dihydroxyphenylacetate or 2,5-OH-PhAc), a central intermediate in the degradation of phenylalanine and tyrosine. Catalyzes the oxidative ring cleavage of the aromatic ring of homogentisate to yield maleylacetoacetate. This chain is Homogentisate 1,2-dioxygenase, found in Burkholderia cenocepacia (strain ATCC BAA-245 / DSM 16553 / LMG 16656 / NCTC 13227 / J2315 / CF5610) (Burkholderia cepacia (strain J2315)).